A 178-amino-acid chain; its full sequence is Endothelin-2 (178 aa).

The signal sequence occupies residues 1 to 24 (MPAPGVHHPNTASPFLKTVAAGKG). Residues 25 to 46 (QVAAAPEHPAPSARARGSHLRP) constitute a propeptide that is removed on maturation. Intrachain disulfides connect C49–C63 and C51–C59. A propeptide spanning residues 70–178 (VNTPGQTAPY…RPTHPRRRKR (109 aa)) is cleaved from the precursor. Residues 96–111 (CECSSGGDPACATFCH) are endothelin-like. Residues 156–178 (RFPRRPQEAGRQLRPTHPRRRKR) are disordered. Positions 169-178 (RPTHPRRRKR) are enriched in basic residues.

It belongs to the endothelin/sarafotoxin family.

It is found in the secreted. Functionally, endothelins are endothelium-derived vasoconstrictor peptides. This chain is Endothelin-2 (EDN2), found in Canis lupus familiaris (Dog).